The chain runs to 880 residues: MSTVEPNVYDPHQVETSAQQFWDATRAFQVDESSEKPKFYCLSMLPYPSGALHMGHVRNYTISDVVSRYKRMTGHNVLQPMGWDAFGLPAENAAIKNKTAPAKWTYANIAHMRAQLKSLGYAIDWSREFATCTPDYYVHEQRMFTRLMRKGLAYRRNAVVNWDPIDQTVLANEQVIDGRGWRSGAVVEKREIPQWFLRITDYAQELLDGLDQLDGWPDSVKTMQRNWIGRSEGLEIQFDVRDTNGAALDPLRVFTTRPDTLMGVTFVSIAAEHPLALHAAKSNPELAALLETLKHGGVSEAELETQEKRGMATGLTAVHPISGEQVPVWVANFVLMGYGTGAVMAVPGHDQRDFEFANKYGLPIVQVVKLREPRNDDEQRWDATEWRDWYTDKSRELELINSAEFDGLDFGGAFEALAERFERKGQGQRRVNYRLRDWGVSRQRYWGCPIPVIYCPKCGAVPVPEDQLPVVLPENVEFACTGSPIKTDPTWRQTTCPDCGGPAERETDTFDTFMESSWYVARYTSPNAREMVDRRANYWMPADLYVGGIEHAILHLMYFRFYHKLMRDARLVDSDEPVTNLLTQGMVIADTFYRDADNGGKDWINPADVEIQRDERGRVTGAVLIADGQPVHIGGTEKMSKSKNNGVDPQSMVAKYGADTVRLFSMFAAPPEQSLEWNEAGVDGMARFMRRLWAQVHKHVGEGAAVALDVAALSAEQKAIRRKTHETIGKVSDDYGRRHSFNTAIAAVMELSNALAKFDDASDQGRAVRQEALEAMVLLLNPITPHASHALWQVLGRGETLLENVAFPQADVSALVRDALTLAVQINGKLRGTIDVAADAAREQIEALAQAEPNAAKFLDGLSVRKIIIVPGKIVNIVAG.

The 'HIGH' region motif lies at 46–56 (PYPSGALHMGH). The 'KMSKS' region motif lies at 638-642 (KMSKS). Lys-641 serves as a coordination point for ATP.

Belongs to the class-I aminoacyl-tRNA synthetase family.

It localises to the cytoplasm. It catalyses the reaction tRNA(Leu) + L-leucine + ATP = L-leucyl-tRNA(Leu) + AMP + diphosphate. This is Leucine--tRNA ligase from Xanthomonas oryzae pv. oryzae (strain MAFF 311018).